Here is a 464-residue protein sequence, read N- to C-terminus: UDP-N-acetylmuramate--L-alanine ligase (464 aa).

112–118 (GTHGKTT) serves as a coordination point for ATP.

The protein belongs to the MurCDEF family.

Its subcellular location is the cytoplasm. The catalysed reaction is UDP-N-acetyl-alpha-D-muramate + L-alanine + ATP = UDP-N-acetyl-alpha-D-muramoyl-L-alanine + ADP + phosphate + H(+). It functions in the pathway cell wall biogenesis; peptidoglycan biosynthesis. Functionally, cell wall formation. In Acidithiobacillus ferrooxidans (strain ATCC 23270 / DSM 14882 / CIP 104768 / NCIMB 8455) (Ferrobacillus ferrooxidans (strain ATCC 23270)), this protein is UDP-N-acetylmuramate--L-alanine ligase.